Here is a 540-residue protein sequence, read N- to C-terminus: CTP synthase (540 aa).

An amidoligase domain region spans residues 1-273; that stretch reads MNNKDLKTKF…DDFILQHFKL (273 aa). Residue serine 19 coordinates CTP. UTP is bound at residue serine 19. ATP is bound at residue 20–25; it reads SLGKGI. Tyrosine 60 lines the L-glutamine pocket. Aspartate 77 lines the ATP pocket. Aspartate 77 and glutamate 147 together coordinate Mg(2+). Residues 154–156, 194–199, and lysine 230 each bind CTP; these read DIE and KTKPTQ. UTP is bound by residues 194-199 and lysine 230; that span reads KTKPTQ. Positions 306-539 constitute a Glutamine amidotransferase type-1 domain; that stretch reads YIVLHDAYLS…VEASLLNQKN (234 aa). L-glutamine is bound at residue glycine 361. The Nucleophile; for glutamine hydrolysis role is filled by cysteine 388. L-glutamine-binding positions include 389–392, glutamate 412, and arginine 466; that span reads LGMQ. Catalysis depends on residues histidine 512 and glutamate 514.

Belongs to the CTP synthase family. Homotetramer.

It catalyses the reaction UTP + L-glutamine + ATP + H2O = CTP + L-glutamate + ADP + phosphate + 2 H(+). It carries out the reaction L-glutamine + H2O = L-glutamate + NH4(+). The enzyme catalyses UTP + NH4(+) + ATP = CTP + ADP + phosphate + 2 H(+). The protein operates within pyrimidine metabolism; CTP biosynthesis via de novo pathway; CTP from UDP: step 2/2. Its activity is regulated as follows. Allosterically activated by GTP, when glutamine is the substrate; GTP has no effect on the reaction when ammonia is the substrate. The allosteric effector GTP functions by stabilizing the protein conformation that binds the tetrahedral intermediate(s) formed during glutamine hydrolysis. Inhibited by the product CTP, via allosteric rather than competitive inhibition. Functionally, catalyzes the ATP-dependent amination of UTP to CTP with either L-glutamine or ammonia as the source of nitrogen. Regulates intracellular CTP levels through interactions with the four ribonucleotide triphosphates. This is CTP synthase from Onion yellows phytoplasma (strain OY-M).